Here is a 369-residue protein sequence, read N- to C-terminus: Putative cyclin-F1-1 (369 aa).

The disordered stretch occupies residues 328 to 350 (AQHHLESKPAGAAGVGINSSGDD).

The protein belongs to the cyclin family. Cyclin F subfamily.

This chain is Putative cyclin-F1-1 (CYCF1-1), found in Oryza sativa subsp. japonica (Rice).